The sequence spans 733 residues: EF-hand domain-containing family member C2 (733 aa).

3 consecutive DM10 domains span residues 61-168 (DKQV…TKIG), 212-354 (DRKV…RTKY), and 416-523 (ISNT…ERNS).

In terms of assembly, microtubule inner protein component of sperm flagellar doublet microtubules. Expressed in trachea multiciliated cells.

Its subcellular location is the cytoplasm. It is found in the cytoskeleton. The protein localises to the cilium axoneme. It localises to the flagellum axoneme. Functionally, microtubule inner protein (MIP) part of the dynein-decorated doublet microtubules (DMTs) in cilia axoneme, which is required for motile cilia beating. In Bos taurus (Bovine), this protein is EF-hand domain-containing family member C2 (EFHC2).